Consider the following 393-residue polypeptide: Beta-ureidopropionase (393 aa).

The CN hydrolase domain maps to 72–344 (VRVGLVQNRI…DGLLVTELNL (273 aa)). Glu-119 (proton acceptor) is an active-site residue. The active-site Proton donor is Lys-196. Catalysis depends on Cys-233, which acts as the Nucleophile. A Phosphoserine modification is found at Ser-378.

It belongs to the carbon-nitrogen hydrolase superfamily. BUP family. As to quaternary structure, homodimer, homotetramer, homooctamer; can also form higher homooligomers.

Its subcellular location is the cytoplasm. It carries out the reaction 3-(carbamoylamino)propanoate + H2O + 2 H(+) = beta-alanine + NH4(+) + CO2. The catalysed reaction is 3-(carbamoylamino)-2-methylpropanoate + H2O + 2 H(+) = (R)-3-amino-2-methylpropanoate + NH4(+) + CO2. It functions in the pathway amino-acid biosynthesis; beta-alanine biosynthesis. In terms of biological role, catalyzes a late step in pyrimidine degradation. Converts N-carbamoyl-beta-alanine (3-ureidopropanoate) into beta-alanine, ammonia and carbon dioxide. Likewise, converts N-carbamoyl-beta-aminoisobutyrate (3-ureidoisobutyrate) into beta-aminoisobutyrate, ammonia and carbon dioxide. The polypeptide is Beta-ureidopropionase (Upb1) (Mus musculus (Mouse)).